We begin with the raw amino-acid sequence, 542 residues long: Quinidine resistance protein 2 (542 aa).

Residues 1-67 (MAGATSSIIR…SFKTVLIAQC (67 aa)) are Cytoplasmic-facing. Serine 21 carries the phosphoserine modification. Threonine 38 is modified (phosphothreonine). Serine 40 carries the phosphoserine modification. The helical transmembrane segment at 68–88 (AFTGFFSTIAGAIYYPVLSVI) threads the bilayer. Residues 89–100 (ERKFDIDEELVN) are Extracellular-facing. The chain crosses the membrane as a helical span at residues 101-121 (VTVVVYFVFQGLAPTFMGGFA). Residues 122–127 (DSLGRR) are Cytoplasmic-facing. The chain crosses the membrane as a helical span at residues 128 to 148 (PVVLVAIVIYFGACIGLACAQ). Residue threonine 149 is a topological domain, extracellular. The chain crosses the membrane as a helical span at residues 150-170 (YAQIIVLRCLQAAGISPVIAI). Residues 171-187 (NSGIMGDVTTRAERGGY) are Cytoplasmic-facing. The chain crosses the membrane as a helical span at residues 188–208 (VGYVAGFQVLGSAFGALIGAG). The Extracellular segment spans residues 209–216 (LSSRWGWR). Residues 217 to 237 (AIFWFLAIGSGICFLASFLIL) traverse the membrane as a helical segment. Topologically, residues 238–300 (PETKRNISGN…APFKILKAYE (63 aa)) are cytoplasmic. A helical membrane pass occupies residues 301 to 321 (ICILMLVAGLQFAMYTTHLTA). Residues 322–333 (LSTALSKQYHLT) are Extracellular-facing. Residues 334–354 (VAKVGLCYLPSGICTLCSIVI) form a helical membrane-spanning segment. Residues 355-413 (AGRYLNWNYRRRLKYYQNWLGKKRSKLLEEHDNDLNLVQRIIENDPKYTFNIFKARLQP) are Cytoplasmic-facing. Residues 414 to 434 (AFVTLLLSSSGFCAYGWCITV) traverse the membrane as a helical segment. Residues 435–437 (KAP) are Extracellular-facing. The chain crosses the membrane as a helical span at residues 438 to 458 (LAAVLCMSGFASLFSNCILTF). The Cytoplasmic portion of the chain corresponds to 459–472 (STTLIVDLFPTKTS). The chain crosses the membrane as a helical span at residues 473 to 493 (TATGCLNLFRCILSAVFIAAL). Residues 494-503 (SKMVEKMKFG) lie on the Extracellular side of the membrane. Residues 504-524 (GVFTFLGALTSSSSILLFILL) form a helical membrane-spanning segment. At 525–542 (RKGKELAFKRKKQELGVN) the chain is on the cytoplasmic side.

Belongs to the major facilitator superfamily. CAR1 family.

The protein localises to the cell membrane. Its function is as follows. Multidrug resistance transporter involved in resistance and adaptation to quinidine and to the herbicide barban (4-chloro-2-butynyl [3-chlorophenyl] carbamate). Implicated in potassium uptake. The sequence is that of Quinidine resistance protein 2 (QDR2) from Saccharomyces cerevisiae (strain ATCC 204508 / S288c) (Baker's yeast).